The following is a 122-amino-acid chain: Large ribosomal subunit protein uL18 (122 aa).

This sequence belongs to the universal ribosomal protein uL18 family. As to quaternary structure, part of the 50S ribosomal subunit; part of the 5S rRNA/L5/L18/L25 subcomplex. Contacts the 5S and 23S rRNAs.

This is one of the proteins that bind and probably mediate the attachment of the 5S RNA into the large ribosomal subunit, where it forms part of the central protuberance. The sequence is that of Large ribosomal subunit protein uL18 from Petrotoga mobilis (strain DSM 10674 / SJ95).